A 227-amino-acid chain; its full sequence is Cytochrome c oxidase subunit 2 (227 aa).

Residues 1–14 (MAYPMQLGFQDATS) are Mitochondrial intermembrane-facing. The chain crosses the membrane as a helical span at residues 15 to 45 (PIMEELLHFHDHTLMIVFLISSLVLYIISLM). At 46–59 (LTTKLTHTSTMDAQ) the chain is on the mitochondrial matrix side. A helical membrane pass occupies residues 60-87 (EVETIWTILPAIILILIALPSLRILYMM). At 88–227 (DEINNPSLTV…YFEKWSASML (140 aa)) the chain is on the mitochondrial intermembrane side. Cu cation-binding residues include histidine 161, cysteine 196, glutamate 198, cysteine 200, histidine 204, and methionine 207. Glutamate 198 serves as a coordination point for Mg(2+). Residue tyrosine 218 is modified to Phosphotyrosine.

The protein belongs to the cytochrome c oxidase subunit 2 family. As to quaternary structure, component of the cytochrome c oxidase (complex IV, CIV), a multisubunit enzyme composed of 14 subunits. The complex is composed of a catalytic core of 3 subunits MT-CO1, MT-CO2 and MT-CO3, encoded in the mitochondrial DNA, and 11 supernumerary subunits COX4I, COX5A, COX5B, COX6A, COX6B, COX6C, COX7A, COX7B, COX7C, COX8 and NDUFA4, which are encoded in the nuclear genome. The complex exists as a monomer or a dimer and forms supercomplexes (SCs) in the inner mitochondrial membrane with NADH-ubiquinone oxidoreductase (complex I, CI) and ubiquinol-cytochrome c oxidoreductase (cytochrome b-c1 complex, complex III, CIII), resulting in different assemblies (supercomplex SCI(1)III(2)IV(1) and megacomplex MCI(2)III(2)IV(2)). Found in a complex with TMEM177, COA6, COX18, COX20, SCO1 and SCO2. Interacts with TMEM177 in a COX20-dependent manner. Interacts with COX20. Interacts with COX16. It depends on Cu cation as a cofactor.

It localises to the mitochondrion inner membrane. It catalyses the reaction 4 Fe(II)-[cytochrome c] + O2 + 8 H(+)(in) = 4 Fe(III)-[cytochrome c] + 2 H2O + 4 H(+)(out). Component of the cytochrome c oxidase, the last enzyme in the mitochondrial electron transport chain which drives oxidative phosphorylation. The respiratory chain contains 3 multisubunit complexes succinate dehydrogenase (complex II, CII), ubiquinol-cytochrome c oxidoreductase (cytochrome b-c1 complex, complex III, CIII) and cytochrome c oxidase (complex IV, CIV), that cooperate to transfer electrons derived from NADH and succinate to molecular oxygen, creating an electrochemical gradient over the inner membrane that drives transmembrane transport and the ATP synthase. Cytochrome c oxidase is the component of the respiratory chain that catalyzes the reduction of oxygen to water. Electrons originating from reduced cytochrome c in the intermembrane space (IMS) are transferred via the dinuclear copper A center (CU(A)) of subunit 2 and heme A of subunit 1 to the active site in subunit 1, a binuclear center (BNC) formed by heme A3 and copper B (CU(B)). The BNC reduces molecular oxygen to 2 water molecules using 4 electrons from cytochrome c in the IMS and 4 protons from the mitochondrial matrix. This chain is Cytochrome c oxidase subunit 2 (MT-CO2), found in Boselaphus tragocamelus (Nilgai).